Consider the following 724-residue polypeptide: Propionyl-CoA carboxylase alpha chain, mitochondrial (724 aa).

One can recognise a Biotin carboxylation domain in the interval 48–495 (KFDKILIANR…TTKYLPEVYP (448 aa)). ATP contacts are provided by residues Lys-163, 195–256 (SRDI…PRHI), Glu-247, and Asn-282. Residues 167–364 (KKIATAARVS…IVQQMLRVSY (198 aa)) enclose the ATP-grasp domain. Positions 322, 335, and 337 each coordinate Mg(2+). The Mn(2+) site is built by Glu-322, Glu-335, and Asn-337. Arg-339 is an active-site residue. Position 395 (Phe-395) interacts with biotin. Positions 649-724 (KAKVDLSTVV…DEGEVLVELE (76 aa)) constitute a Biotinyl-binding domain. Residue Lys-690 is modified to N6-biotinyllysine.

As to quaternary structure, the holoenzyme is a dodecamer composed of 6 alpha subunits and 6 beta subunits. Interacts with sir-2.2 and sir-2.3. Biotin serves as cofactor. Requires Mg(2+) as cofactor. Mn(2+) is required as a cofactor. In terms of processing, the biotin cofactor is covalently attached to the C-terminal biotinyl-binding domain and is required for the catalytic activity.

The protein localises to the mitochondrion matrix. It carries out the reaction propanoyl-CoA + hydrogencarbonate + ATP = (S)-methylmalonyl-CoA + ADP + phosphate + H(+). The catalysed reaction is butanoyl-CoA + hydrogencarbonate + ATP = (2S)-ethylmalonyl-CoA + ADP + phosphate + H(+). It functions in the pathway metabolic intermediate metabolism; propanoyl-CoA degradation; succinyl-CoA from propanoyl-CoA: step 1/3. This is one of the 2 subunits of the biotin-dependent propionyl-CoA carboxylase (PCC), a mitochondrial enzyme involved in the catabolism of odd chain fatty acids, branched-chain amino acids isoleucine, threonine, methionine, and valine and other metabolites. Propionyl-CoA carboxylase catalyzes the carboxylation of propionyl-CoA/propanoyl-CoA to D-methylmalonyl-CoA/(S)-methylmalonyl-CoA. Within the holoenzyme, the alpha subunit catalyzes the ATP-dependent carboxylation of the biotin carried by the biotin carboxyl carrier (BCC) domain, while the beta subunit then transfers the carboxyl group from carboxylated biotin to propionyl-CoA. Propionyl-CoA carboxylase also significantly acts on butyryl-CoA/butanoyl-CoA, which is converted to ethylmalonyl-CoA/(2S)-ethylmalonyl-CoA. Other alternative minor substrates include (2E)-butenoyl-CoA/crotonoyl-CoA. The sequence is that of Propionyl-CoA carboxylase alpha chain, mitochondrial (pcca-1) from Caenorhabditis elegans.